Consider the following 377-residue polypeptide: Nitric oxide reductase FlRd-NAD(+) reductase (377 aa).

It belongs to the FAD-dependent oxidoreductase family. FAD serves as cofactor.

The protein localises to the cytoplasm. The catalysed reaction is 2 reduced [nitric oxide reductase rubredoxin domain] + NAD(+) + H(+) = 2 oxidized [nitric oxide reductase rubredoxin domain] + NADH. Its pathway is nitrogen metabolism; nitric oxide reduction. Its function is as follows. One of at least two accessory proteins for anaerobic nitric oxide (NO) reductase. Reduces the rubredoxin moiety of NO reductase. The sequence is that of Nitric oxide reductase FlRd-NAD(+) reductase from Escherichia coli (strain K12 / MC4100 / BW2952).